The chain runs to 546 residues: Phenylalanine--tRNA ligase beta subunit (546 aa).

Residues 266-342 (LAPAERVVSV…IAYGIENFDA (77 aa)) enclose the B5 domain. Residues Asp320, Asp326, Glu329, and Asp330 each contribute to the Mg(2+) site.

The protein belongs to the phenylalanyl-tRNA synthetase beta subunit family. Type 2 subfamily. Tetramer of two alpha and two beta subunits. Mg(2+) serves as cofactor.

It localises to the cytoplasm. It carries out the reaction tRNA(Phe) + L-phenylalanine + ATP = L-phenylalanyl-tRNA(Phe) + AMP + diphosphate + H(+). The polypeptide is Phenylalanine--tRNA ligase beta subunit (Methanoculleus marisnigri (strain ATCC 35101 / DSM 1498 / JR1)).